Here is a 440-residue protein sequence, read N- to C-terminus: Syntrophin-1 (440 aa).

PH domains lie at 2 to 208 (AAVR…ACTT) and 227 to 340 (QVRH…IGGY). The 84-residue stretch at 45–128 (TVRVVKYDGN…VVDLQVQYRR (84 aa)) folds into the PDZ domain. Positions 384 to 440 (SFETIRATGDDGGRFLWVDFGPPHGEQELDLLNSAKPVVFILHSFLATKVYRLGLYA) constitute an SU domain.

It belongs to the syntrophin family. In terms of assembly, component of the dystrophin glycoprotein complex (DGC). Interacts with dyb-1, dys-1 and snf-6 to form the DGC. As to expression, expressed in neurons and muscles; particularly strong expression in the body wall, head and vulval muscles, and in ventral nerve cord (at protein level).

It is found in the membrane. It localises to the cytoplasm. Its subcellular location is the cytoskeleton. Its function is as follows. Adapter protein that binds to and probably organizes the subcellular localization of a variety of membrane proteins. May link various receptors to the actin cytoskeleton and the dystrophin glycoprotein complex (DGC). May also act by slowing calcium channel activity via a direct or indirect mechanism potentially involving other second messengers. Plays an early role in the formation of the neuromuscular junction and is necessary for muscle maintenance. In Caenorhabditis elegans, this protein is Syntrophin-1.